The sequence spans 376 residues: 4-hydroxy-3-methylbut-2-en-1-yl diphosphate synthase (flavodoxin) (376 aa).

C270, C273, C305, and E312 together coordinate [4Fe-4S] cluster.

This sequence belongs to the IspG family. Requires [4Fe-4S] cluster as cofactor.

It catalyses the reaction (2E)-4-hydroxy-3-methylbut-2-enyl diphosphate + oxidized [flavodoxin] + H2O + 2 H(+) = 2-C-methyl-D-erythritol 2,4-cyclic diphosphate + reduced [flavodoxin]. Its pathway is isoprenoid biosynthesis; isopentenyl diphosphate biosynthesis via DXP pathway; isopentenyl diphosphate from 1-deoxy-D-xylulose 5-phosphate: step 5/6. In terms of biological role, converts 2C-methyl-D-erythritol 2,4-cyclodiphosphate (ME-2,4cPP) into 1-hydroxy-2-methyl-2-(E)-butenyl 4-diphosphate. This Colwellia psychrerythraea (strain 34H / ATCC BAA-681) (Vibrio psychroerythus) protein is 4-hydroxy-3-methylbut-2-en-1-yl diphosphate synthase (flavodoxin).